Reading from the N-terminus, the 289-residue chain is Light-independent protochlorophyllide reductase iron-sulfur ATP-binding protein (289 aa).

Residues 10–15 and Lys39 each bind ATP; that span reads GIGKST. Ser14 is a Mg(2+) binding site. [4Fe-4S] cluster is bound by residues Cys95 and Cys129. An ATP-binding site is contributed by 180–181; the sequence is NR.

It belongs to the NifH/BchL/ChlL family. In terms of assembly, homodimer. Protochlorophyllide reductase is composed of three subunits; ChlL, ChlN and ChlB. It depends on [4Fe-4S] cluster as a cofactor.

The protein resides in the plastid. Its subcellular location is the chloroplast. It carries out the reaction chlorophyllide a + oxidized 2[4Fe-4S]-[ferredoxin] + 2 ADP + 2 phosphate = protochlorophyllide a + reduced 2[4Fe-4S]-[ferredoxin] + 2 ATP + 2 H2O. It participates in porphyrin-containing compound metabolism; chlorophyll biosynthesis (light-independent). Its function is as follows. Component of the dark-operative protochlorophyllide reductase (DPOR) that uses Mg-ATP and reduced ferredoxin to reduce ring D of protochlorophyllide (Pchlide) to form chlorophyllide a (Chlide). This reaction is light-independent. The L component serves as a unique electron donor to the NB-component of the complex, and binds Mg-ATP. The sequence is that of Light-independent protochlorophyllide reductase iron-sulfur ATP-binding protein from Tetradesmus obliquus (Green alga).